Here is a 353-residue protein sequence, read N- to C-terminus: Biotin synthase (353 aa).

The Radical SAM core domain occupies 51–270 (NEVQCNQLLN…IALARIMMPK (220 aa)). 3 residues coordinate [4Fe-4S] cluster: cysteine 66, cysteine 70, and cysteine 73. 4 residues coordinate [2Fe-2S] cluster: cysteine 110, cysteine 141, cysteine 201, and arginine 274. The segment at 330-353 (APVEAHSHDHDHDHHDHHHGHSHS) is disordered. Basic and acidic residues predominate over residues 334–343 (AHSHDHDHDH). The span at 344-353 (HDHHHGHSHS) shows a compositional bias: basic residues.

It belongs to the radical SAM superfamily. Biotin synthase family. Homodimer. [4Fe-4S] cluster serves as cofactor. The cofactor is [2Fe-2S] cluster.

The catalysed reaction is (4R,5S)-dethiobiotin + (sulfur carrier)-SH + 2 reduced [2Fe-2S]-[ferredoxin] + 2 S-adenosyl-L-methionine = (sulfur carrier)-H + biotin + 2 5'-deoxyadenosine + 2 L-methionine + 2 oxidized [2Fe-2S]-[ferredoxin]. It functions in the pathway cofactor biosynthesis; biotin biosynthesis; biotin from 7,8-diaminononanoate: step 2/2. In terms of biological role, catalyzes the conversion of dethiobiotin (DTB) to biotin by the insertion of a sulfur atom into dethiobiotin via a radical-based mechanism. The chain is Biotin synthase from Rhodopseudomonas palustris (strain HaA2).